A 44-amino-acid polypeptide reads, in one-letter code: MRDLKTYLSVAPVLSTLWFGSLAGLLIEINRFFPDALTFPFFSF.

Residues 7 to 27 (YLSVAPVLSTLWFGSLAGLLI) traverse the membrane as a helical segment.

It belongs to the PsaJ family.

It is found in the plastid. It localises to the chloroplast thylakoid membrane. Its function is as follows. May help in the organization of the PsaE and PsaF subunits. This chain is Photosystem I reaction center subunit IX, found in Lactuca sativa (Garden lettuce).